Reading from the N-terminus, the 155-residue chain is Transcriptional repressor NrdR (155 aa).

Residues 3–34 fold into a zinc finger; sequence CPFCGNVDTQVKDSRPAEDHVSIRRRRFCPAC. The ATP-cone domain maps to 49–139; it reads LVVIKTNGKR…VYKNFQAADD (91 aa).

The protein belongs to the NrdR family. Zn(2+) serves as cofactor.

Functionally, negatively regulates transcription of bacterial ribonucleotide reductase nrd genes and operons by binding to NrdR-boxes. This Ruegeria sp. (strain TM1040) (Silicibacter sp.) protein is Transcriptional repressor NrdR.